The following is a 294-amino-acid chain: Nucleotide-binding protein LCA_0526 (294 aa).

12–19 (GMSGAGKT) lines the ATP pocket. Position 62-65 (62-65 (DLRS)) interacts with GTP.

The protein belongs to the RapZ-like family.

Its function is as follows. Displays ATPase and GTPase activities. This Latilactobacillus sakei subsp. sakei (strain 23K) (Lactobacillus sakei subsp. sakei) protein is Nucleotide-binding protein LCA_0526.